A 193-amino-acid chain; its full sequence is Potassium-transporting ATPase KdpC subunit (193 aa).

A helical membrane pass occupies residues 14-34; it reads ITFTFLVLCGLVYPLIVTGIA.

This sequence belongs to the KdpC family. In terms of assembly, the system is composed of three essential subunits: KdpA, KdpB and KdpC.

The protein localises to the cell membrane. Functionally, part of the high-affinity ATP-driven potassium transport (or Kdp) system, which catalyzes the hydrolysis of ATP coupled with the electrogenic transport of potassium into the cytoplasm. This subunit acts as a catalytic chaperone that increases the ATP-binding affinity of the ATP-hydrolyzing subunit KdpB by the formation of a transient KdpB/KdpC/ATP ternary complex. This is Potassium-transporting ATPase KdpC subunit from Bacillus mycoides (strain KBAB4) (Bacillus weihenstephanensis).